The primary structure comprises 180 residues: Protein SPMIP9 (180 aa).

In terms of assembly, microtubule inner protein component of sperm flagellar doublet microtubules.

Its subcellular location is the nucleus. The protein resides in the cytoplasm. It is found in the cytoskeleton. The protein localises to the flagellum axoneme. Functionally, microtubule inner protein (MIP) part of the dynein-decorated doublet microtubules (DMTs) in flagella axoneme. The sequence is that of Protein SPMIP9 (SPMIP9) from Bos taurus (Bovine).